The chain runs to 136 residues: Urease subunit beta (136 aa).

Positions 112-136 are disordered; the sequence is ENDEYAGVFGDNGTENVNKKGGKRS.

It belongs to the urease beta subunit family. In terms of assembly, heterotrimer of UreA (gamma), UreB (beta) and UreC (alpha) subunits. Three heterotrimers associate to form the active enzyme.

The protein localises to the cytoplasm. It catalyses the reaction urea + 2 H2O + H(+) = hydrogencarbonate + 2 NH4(+). It functions in the pathway nitrogen metabolism; urea degradation; CO(2) and NH(3) from urea (urease route): step 1/1. The polypeptide is Urease subunit beta (Staphylococcus aureus (strain MRSA252)).